The following is a 1286-amino-acid chain: Galactose/N-acetyl-D-galactosamine lectin heavy subunit 2 (1286 aa).

A signal peptide spans 1–15 (MKLLLLNILLLCCLA). Over 16–1227 (DKLNEFSADI…NNVGAIAAAT (1212 aa)) the chain is Extracellular. Residues Asn-200, Asn-331, Asn-384, Asn-462, Asn-652, Asn-883, Asn-1197, and Asn-1207 are each glycosylated (N-linked (GlcNAc...) asparagine). A helical transmembrane segment spans residues 1228 to 1248 (TVAVVVVAVVVALIVVSIGLF). The Cytoplasmic portion of the chain corresponds to 1249 to 1286 (KTYQLVSSAMKNAITTTNENAEYVGADNEATNAATYNG).

As to quaternary structure, heterodimer composed of a 170 kDa heavy subunit (hgl) and a 31/35 kDa light subunit (lgl); disulfide-linked. In terms of processing, N-glycosylated.

It is found in the cell membrane. Lectin which binds galactose and N-acetyl-D-galactosamine of host glycoproteins and thus mediates adhesion to host cells. Mediates adherence to host colonic mucins, an essential step for pathogenic tissue invasion. The protein is Galactose/N-acetyl-D-galactosamine lectin heavy subunit 2 of Entamoeba histolytica (strain ATCC 30459 / HM-1:IMSS / ABRM).